The chain runs to 39 residues: Osmotin-like protein (39 aa).

This sequence belongs to the thaumatin family. In terms of processing, contains intrachain disulfide bonds.

In terms of biological role, may be an important antifungal protein. This chain is Osmotin-like protein, found in Hevea brasiliensis (Para rubber tree).